A 358-amino-acid polypeptide reads, in one-letter code: E3 ubiquitin-protein ligase RFI2 (358 aa).

The disordered stretch occupies residues Met1–Val34. The RING-type; atypical zinc-finger motif lies at Cys38–Arg83. Disordered stretches follow at residues Gly174–His201 and Ser248–Val313. Over residues Thr187 to His201 the composition is skewed to basic and acidic residues. Over residues Ser248 to Met266 the composition is skewed to polar residues. Over residues Leu299 to Pro309 the composition is skewed to pro residues.

The protein localises to the nucleus. The catalysed reaction is S-ubiquitinyl-[E2 ubiquitin-conjugating enzyme]-L-cysteine + [acceptor protein]-L-lysine = [E2 ubiquitin-conjugating enzyme]-L-cysteine + N(6)-ubiquitinyl-[acceptor protein]-L-lysine.. It participates in protein modification; protein ubiquitination. In terms of biological role, mediates phytochrome (phyA and phyB)-controlled seedling deetiolation responses such as hypocotyl elongation in response to red and far-red light. Required for light-induced expression of LHCB3 and CHALCONE SYNTHASE (CHS). Negatively regulates CONSTANS (CO) and FLOWERING LOCUS T (FT) expression and photoperiodic flowering. The polypeptide is E3 ubiquitin-protein ligase RFI2 (Arabidopsis thaliana (Mouse-ear cress)).